A 239-amino-acid polypeptide reads, in one-letter code: Phosphoribosylaminoimidazole-succinocarboxamide synthase (239 aa).

It belongs to the SAICAR synthetase family.

It carries out the reaction 5-amino-1-(5-phospho-D-ribosyl)imidazole-4-carboxylate + L-aspartate + ATP = (2S)-2-[5-amino-1-(5-phospho-beta-D-ribosyl)imidazole-4-carboxamido]succinate + ADP + phosphate + 2 H(+). It functions in the pathway purine metabolism; IMP biosynthesis via de novo pathway; 5-amino-1-(5-phospho-D-ribosyl)imidazole-4-carboxamide from 5-amino-1-(5-phospho-D-ribosyl)imidazole-4-carboxylate: step 1/2. The protein is Phosphoribosylaminoimidazole-succinocarboxamide synthase of Bacillus thuringiensis subsp. konkukian (strain 97-27).